A 242-amino-acid chain; its full sequence is Uridylate kinase (242 aa).

16 to 19 (KVSG) contacts ATP. Residue Gly58 coordinates UMP. ATP-binding residues include Gly59 and Arg63. Residues Asp78 and 139 to 146 (TGNPFCTT) each bind UMP. The ATP site is built by Thr166, Gln167, Tyr172, and Asp175.

The protein belongs to the UMP kinase family. In terms of assembly, homohexamer.

The protein localises to the cytoplasm. The catalysed reaction is UMP + ATP = UDP + ADP. It participates in pyrimidine metabolism; CTP biosynthesis via de novo pathway; UDP from UMP (UMPK route): step 1/1. Its activity is regulated as follows. Inhibited by UTP. In terms of biological role, catalyzes the reversible phosphorylation of UMP to UDP. In Rickettsia massiliae (strain Mtu5), this protein is Uridylate kinase.